The chain runs to 256 residues: Probable elongation factor 1-delta (256 aa).

Residues serine 37, serine 53, and serine 89 each carry the phosphoserine modification. Positions 110–146 are disordered; sequence NGVSKEPEVEAKKPEANDDDDDVDLFGSDSEEEDGEA. Positions 114–125 are enriched in basic and acidic residues; sequence KEPEVEAKKPEA. Acidic residues predominate over residues 126–144; the sequence is NDDDDDVDLFGSDSEEEDG. Serine 137 and serine 139 each carry phosphoserine.

Belongs to the EF-1-beta/EF-1-delta family. As to quaternary structure, EF-1 is composed of 4 subunits: alpha, beta, delta, and gamma.

EF-1-beta and EF-1-delta stimulate the exchange of GDP bound to EF-1-alpha to GTP. The protein is Probable elongation factor 1-delta (eEF1delta) of Drosophila melanogaster (Fruit fly).